Consider the following 855-residue polypeptide: DNA mismatch repair protein MutS (855 aa).

An ATP-binding site is contributed by 616–623; sequence GPNMGGKS.

Belongs to the DNA mismatch repair MutS family.

In terms of biological role, this protein is involved in the repair of mismatches in DNA. It is possible that it carries out the mismatch recognition step. This protein has a weak ATPase activity. This chain is DNA mismatch repair protein MutS, found in Salmonella paratyphi C (strain RKS4594).